Reading from the N-terminus, the 368-residue chain is Phospho-N-acetylmuramoyl-pentapeptide-transferase (368 aa).

Helical transmembrane passes span 50–70 (LLAL…VVPL), 95–115 (PTMG…ILAG), 117–137 (SPLV…GWLD), 156–176 (LCLQ…QQGW), 183–203 (ITLP…LAVF), 218–238 (LDGL…LWLA), 242–262 (PAIA…LLHN), 284–304 (AIAI…LFVL), and 347–367 (TQVV…CWLL).

The protein belongs to the glycosyltransferase 4 family. MraY subfamily. Requires Mg(2+) as cofactor.

Its subcellular location is the cell inner membrane. The catalysed reaction is UDP-N-acetyl-alpha-D-muramoyl-L-alanyl-gamma-D-glutamyl-meso-2,6-diaminopimeloyl-D-alanyl-D-alanine + di-trans,octa-cis-undecaprenyl phosphate = di-trans,octa-cis-undecaprenyl diphospho-N-acetyl-alpha-D-muramoyl-L-alanyl-D-glutamyl-meso-2,6-diaminopimeloyl-D-alanyl-D-alanine + UMP. It functions in the pathway cell wall biogenesis; peptidoglycan biosynthesis. Its function is as follows. Catalyzes the initial step of the lipid cycle reactions in the biosynthesis of the cell wall peptidoglycan: transfers peptidoglycan precursor phospho-MurNAc-pentapeptide from UDP-MurNAc-pentapeptide onto the lipid carrier undecaprenyl phosphate, yielding undecaprenyl-pyrophosphoryl-MurNAc-pentapeptide, known as lipid I. In Synechococcus sp. (strain ATCC 27144 / PCC 6301 / SAUG 1402/1) (Anacystis nidulans), this protein is Phospho-N-acetylmuramoyl-pentapeptide-transferase.